Consider the following 399-residue polypeptide: Acetylornithine aminotransferase (399 aa).

Residues 102-103 and phenylalanine 138 contribute to the pyridoxal 5'-phosphate site; that span reads GA. Arginine 141 is a N(2)-acetyl-L-ornithine binding site. 223–226 lines the pyridoxal 5'-phosphate pocket; it reads DEVQ. An N6-(pyridoxal phosphate)lysine modification is found at lysine 252. Residue threonine 280 participates in pyridoxal 5'-phosphate binding.

This sequence belongs to the class-III pyridoxal-phosphate-dependent aminotransferase family. ArgD subfamily. Homodimer. It depends on pyridoxal 5'-phosphate as a cofactor.

It localises to the cytoplasm. It carries out the reaction N(2)-acetyl-L-ornithine + 2-oxoglutarate = N-acetyl-L-glutamate 5-semialdehyde + L-glutamate. It functions in the pathway amino-acid biosynthesis; L-arginine biosynthesis; N(2)-acetyl-L-ornithine from L-glutamate: step 4/4. The sequence is that of Acetylornithine aminotransferase from Ralstonia nicotianae (strain ATCC BAA-1114 / GMI1000) (Ralstonia solanacearum).